The chain runs to 493 residues: UDP-glucose 6-dehydrogenase (493 aa).

NAD(+)-binding positions include 11 to 16 (GAGYVG), Asp-36, Arg-41, and 89 to 93 (VNTPT). The segment at 88 to 110 (SVNTPTKTYGMGKGRAADLKYIE) is disordered. Lys-107 carries the N6-acetyllysine modification. The allosteric switch region stretch occupies residues 129–135 (KSTVPVR). 130–132 (STV) contacts NAD(+). The active-site Proton donor/acceptor is Glu-161. Substrate is bound by residues 161 to 165 (EFLAE), 220 to 224 (KLAAN), Arg-260, and 267 to 273 (KASVGFG). Glu-165 provides a ligand contact to NAD(+). The Proton donor/acceptor role is filled by Lys-220. Cys-276 serves as the catalytic Nucleophile. 276–279 (CFQK) lines the NAD(+) pocket. Residues 321–325 (SLFNT) are important for formation of active hexamer structure. A substrate-binding site is contributed by 338–339 (FK). Residue Arg-346 participates in NAD(+) binding. Residue Arg-442 participates in substrate binding. The disordered stretch occupies residues 466 to 493 (VSSKRIPYTPGEIPKFSLQDPPNKKPKV). A Phosphothreonine modification is found at Thr-474.

This sequence belongs to the UDP-glucose/GDP-mannose dehydrogenase family. In terms of assembly, homohexamer.

It carries out the reaction UDP-alpha-D-glucose + 2 NAD(+) + H2O = UDP-alpha-D-glucuronate + 2 NADH + 3 H(+). It participates in nucleotide-sugar biosynthesis; UDP-alpha-D-glucuronate biosynthesis; UDP-alpha-D-glucuronate from UDP-alpha-D-glucose: step 1/1. With respect to regulation, UDP-alpha-D-xylose (UDX) acts as a feedback inhibitor. It binds at the same site as the substrate, but functions as allosteric inhibitor by triggering a conformation change that disrupts the active hexameric ring structure and gives rise to an inactive, horseshoe-shaped hexamer. Functionally, catalyzes the formation of UDP-alpha-D-glucuronate, a constituent of complex glycosaminoglycans. Required for the biosynthesis of chondroitin sulfate and heparan sulfate. Required for embryonic development via its role in the biosynthesis of glycosaminoglycans. Required for proper brain and neuronal development. This chain is UDP-glucose 6-dehydrogenase (Ugdh), found in Rattus norvegicus (Rat).